The sequence spans 478 residues: Pyruvate kinase (478 aa).

Substrate is bound at residue arginine 36. Positions 38, 40, and 70 each coordinate K(+). 38–41 contributes to the ATP binding site; the sequence is NFSH. Positions 77 and 160 each coordinate ATP. Glutamate 225 provides a ligand contact to Mg(2+). The substrate site is built by glycine 251, aspartate 252, and threonine 284. Aspartate 252 provides a ligand contact to Mg(2+).

This sequence belongs to the pyruvate kinase family. In terms of assembly, homotetramer. Mg(2+) is required as a cofactor. It depends on K(+) as a cofactor.

It carries out the reaction pyruvate + ATP = phosphoenolpyruvate + ADP + H(+). Its pathway is carbohydrate degradation; glycolysis; pyruvate from D-glyceraldehyde 3-phosphate: step 5/5. Allosterically activated by AMP and by several sugar phosphates. Belongs to type II PK. The chain is Pyruvate kinase (pykA) from Haemophilus influenzae (strain ATCC 51907 / DSM 11121 / KW20 / Rd).